Reading from the N-terminus, the 621-residue chain is 1-deoxy-D-xylulose-5-phosphate synthase (621 aa).

Thiamine diphosphate-binding positions include H80 and G121–S123. D152 is a binding site for Mg(2+). Residues G153–A154, N181, Y288, and E370 contribute to the thiamine diphosphate site. N181 contributes to the Mg(2+) binding site.

It belongs to the transketolase family. DXPS subfamily. Homodimer. Requires Mg(2+) as cofactor. The cofactor is thiamine diphosphate.

It catalyses the reaction D-glyceraldehyde 3-phosphate + pyruvate + H(+) = 1-deoxy-D-xylulose 5-phosphate + CO2. Its pathway is metabolic intermediate biosynthesis; 1-deoxy-D-xylulose 5-phosphate biosynthesis; 1-deoxy-D-xylulose 5-phosphate from D-glyceraldehyde 3-phosphate and pyruvate: step 1/1. Its function is as follows. Catalyzes the acyloin condensation reaction between C atoms 2 and 3 of pyruvate and glyceraldehyde 3-phosphate to yield 1-deoxy-D-xylulose-5-phosphate (DXP). The protein is 1-deoxy-D-xylulose-5-phosphate synthase of Erwinia tasmaniensis (strain DSM 17950 / CFBP 7177 / CIP 109463 / NCPPB 4357 / Et1/99).